Reading from the N-terminus, the 214-residue chain is uncharacterized protein (214 aa).

The first 17 residues, 1 to 17 (MWCFIVFLTIFLPTLEG), serve as a signal peptide directing secretion. N-linked (GlcNAc...) asparagine glycosylation is found at Asn-88 and Asn-139.

Component of the acid-insoluble organic matrix of calcified layers of the shell (at protein level).

It localises to the secreted. This is an uncharacterized protein from Lottia gigantea (Giant owl limpet).